Reading from the N-terminus, the 519-residue chain is Histidine ammonia-lyase (519 aa).

Positions 146–148 (ASG) form a cross-link, 5-imidazolinone (Ala-Gly). Residue serine 147 is modified to 2,3-didehydroalanine (Ser).

This sequence belongs to the PAL/histidase family. In terms of processing, contains an active site 4-methylidene-imidazol-5-one (MIO), which is formed autocatalytically by cyclization and dehydration of residues Ala-Ser-Gly.

It localises to the cytoplasm. It catalyses the reaction L-histidine = trans-urocanate + NH4(+). It participates in amino-acid degradation; L-histidine degradation into L-glutamate; N-formimidoyl-L-glutamate from L-histidine: step 1/3. The chain is Histidine ammonia-lyase from Bradyrhizobium diazoefficiens (strain JCM 10833 / BCRC 13528 / IAM 13628 / NBRC 14792 / USDA 110).